The primary structure comprises 362 residues: NAD(P)H-quinone oxidoreductase subunit 1, chloroplastic (362 aa).

Helical transmembrane passes span 31–51, 99–119, 132–152, 178–198, 206–226, 268–288, 303–323, and 336–356; these read WVPLPILSLVIVATLGVLVIV, WLFTLGPAVVVIPIFLAYLVV, IGIFFWIAISSIAPIGLLMSG, LAICVLSVCLLADSLSTVDIV, ILTWNIWRQPIGFVAFLIAAL, LVSGCFVTVLYLGGWHGPFAI, AFLGITWTLLKTFLFLFAAIL, and LLDLGWKFLLPVSLGNLLLTA.

The protein belongs to the complex I subunit 1 family. NDH is composed of at least 16 different subunits, 5 of which are encoded in the nucleus.

It localises to the plastid. Its subcellular location is the chloroplast thylakoid membrane. The catalysed reaction is a plastoquinone + NADH + (n+1) H(+)(in) = a plastoquinol + NAD(+) + n H(+)(out). The enzyme catalyses a plastoquinone + NADPH + (n+1) H(+)(in) = a plastoquinol + NADP(+) + n H(+)(out). Its function is as follows. NDH shuttles electrons from NAD(P)H:plastoquinone, via FMN and iron-sulfur (Fe-S) centers, to quinones in the photosynthetic chain and possibly in a chloroplast respiratory chain. The immediate electron acceptor for the enzyme in this species is believed to be plastoquinone. Couples the redox reaction to proton translocation, and thus conserves the redox energy in a proton gradient. This chain is NAD(P)H-quinone oxidoreductase subunit 1, chloroplastic, found in Nephroselmis olivacea (Green alga).